Reading from the N-terminus, the 470-residue chain is MGSGRVRVRFAPSPTGIFHVGGARSALFNWLVALRAGGDFVLRVEDTDASRNRPEWTDGIISALDWLGISPGRYEGPVLQSSRADRHRAAAVRLREAGLAYFCDCTREALAERTGNAQHGYDGFCRDRGLEPGPGRALRFRTPDDGVTTVHDLIRGTPEFPNDTIEDFVIARADGSAVFLLANVVDDLEMGITHVIRGEEHLSNTPKQQLLWAALGAAEPPVWAHVPVIVNEKRQKLSKRRDKVALESYRDEGYLPGAMKNYLMLLGWAPSGDDEIVPWETIESTFDLADVKPSPAFFDEKKLRAFNGEYIRALSVEEFIAAVEPWLAPPAAPWAADAFDAGTFAAVAGLAQSRVSVLAEIVPMVDFLFLPAAPVDDAAWAKAMKGPAAQLLADVHDVFGKIEWDAETLKATLAELGERHGLKLAKAQAPVRVAVTGRTVGLPLFESLEVFGREATRRRIAAARDRLAAG.

A 'HIGH' region motif is present at residues 12–22 (PSPTGIFHVGG). Zn(2+) contacts are provided by Cys103, Cys105, Cys125, and Asp127. A 'KMSKS' region motif is present at residues 236-240 (KLSKR). Lys239 contributes to the ATP binding site.

This sequence belongs to the class-I aminoacyl-tRNA synthetase family. Glutamate--tRNA ligase type 1 subfamily. In terms of assembly, monomer. The cofactor is Zn(2+).

It is found in the cytoplasm. The enzyme catalyses tRNA(Glu) + L-glutamate + ATP = L-glutamyl-tRNA(Glu) + AMP + diphosphate. Its function is as follows. Catalyzes the attachment of glutamate to tRNA(Glu) in a two-step reaction: glutamate is first activated by ATP to form Glu-AMP and then transferred to the acceptor end of tRNA(Glu). This chain is Glutamate--tRNA ligase, found in Frankia alni (strain DSM 45986 / CECT 9034 / ACN14a).